The primary structure comprises 315 residues: Cytochrome c biogenesis protein CcsA (315 aa).

The next 8 helical transmembrane spans lie at 15 to 35, 39 to 59, 73 to 93, 97 to 117, 144 to 164, 222 to 242, 257 to 277, and 283 to 303; these read SCFL…GFGG, FSFT…LQLI, LYES…YIEV, TLFL…FTDF, VMIA…AYLV, TIGI…IWAN, WAFI…VGGW, and ALVA…VNLL.

Belongs to the CcmF/CycK/Ccl1/NrfE/CcsA family. As to quaternary structure, may interact with Ccs1.

The protein localises to the plastid. The protein resides in the chloroplast thylakoid membrane. In terms of biological role, required during biogenesis of c-type cytochromes (cytochrome c6 and cytochrome f) at the step of heme attachment. The protein is Cytochrome c biogenesis protein CcsA of Chlorella vulgaris (Green alga).